The following is a 393-amino-acid chain: Interleukin-1 receptor type 2 (393 aa).

Residues 1–13 form the signal peptide; sequence MFRLYVLVMGVSA. Topologically, residues 14–347 are extracellular; that stretch reads FTLQPAAHTG…RTTVKEPPPT (334 aa). 3 disulfide bridges follow: Cys-28/Cys-116, Cys-50/Cys-108, and Cys-152/Cys-207. 3 Ig-like C2-type domains span residues 29 to 120, 134 to 221, and 237 to 342; these read PVRG…DKVS, PFIS…YNIT, and PVII…TTVK. N-linked (GlcNAc...) asparagine glycosylation is found at Asn-66, Asn-72, and Asn-112. Asn-219 and Asn-277 each carry an N-linked (GlcNAc...) asparagine glycan. A disulfide bridge connects residues Cys-258 and Cys-326. A helical transmembrane segment spans residues 348 to 368; the sequence is FSWGIVLAPLALAFLVLGGIW. The Cytoplasmic segment spans residues 369 to 393; the sequence is MHRRCKHRTGKADGLTVLRPHHQDF.

Belongs to the interleukin-1 receptor family. In terms of assembly, forms a non-signaling receptor complex consisting of IL1R2 and IL1RAP. In terms of processing, a soluble form (sIL1R2) can also be produced by proteolytic cleavage at the cell surface (shedding) involving a metalloproteinase.

The protein localises to the secreted. It is found in the cell membrane. Functionally, non-signaling receptor for IL1A, IL1B and IL1RN. Reduces IL1B activities. Serves as a decoy receptor by competitive binding to IL1B and preventing its binding to IL1R1. Also modulates cellular response through non-signaling association with IL1RAP after binding to IL1B. IL1R2 (membrane and secreted forms) preferentially binds IL1B and poorly IL1A and IL1RN. The secreted IL1R2 recruits secreted IL1RAP with high affinity; this complex formation may be the dominant mechanism for neutralization of IL1B by secreted/soluble receptors. This chain is Interleukin-1 receptor type 2 (IL1R2), found in Chlorocebus aethiops (Green monkey).